Reading from the N-terminus, the 121-residue chain is Large ribosomal subunit protein uL14 (121 aa).

This sequence belongs to the universal ribosomal protein uL14 family. As to quaternary structure, part of the 50S ribosomal subunit. Forms a cluster with proteins L3 and L19. In the 70S ribosome, L14 and L19 interact and together make contacts with the 16S rRNA in bridges B5 and B8.

In terms of biological role, binds to 23S rRNA. Forms part of two intersubunit bridges in the 70S ribosome. The sequence is that of Large ribosomal subunit protein uL14 from Prochlorococcus marinus (strain MIT 9211).